We begin with the raw amino-acid sequence, 76 residues long: Tautomerase PptA (76 aa).

The active-site Proton acceptor; via imino nitrogen is the proline 2.

This sequence belongs to the 4-oxalocrotonate tautomerase family. PptA subfamily. As to quaternary structure, homodimer.

The protein localises to the cytoplasm. This Pectobacterium carotovorum subsp. carotovorum (strain PC1) protein is Tautomerase PptA.